A 238-amino-acid chain; its full sequence is Pyridoxine 5'-phosphate synthase (238 aa).

Asn-7 serves as a coordination point for 3-amino-2-oxopropyl phosphate. A 1-deoxy-D-xylulose 5-phosphate-binding site is contributed by 9–10 (DH). Residue Arg-18 coordinates 3-amino-2-oxopropyl phosphate. His-43 serves as the catalytic Proton acceptor. 1-deoxy-D-xylulose 5-phosphate is bound by residues Arg-45 and His-50. Glu-70 (proton acceptor) is an active-site residue. Position 100 (Thr-100) interacts with 1-deoxy-D-xylulose 5-phosphate. His-190 functions as the Proton donor in the catalytic mechanism. Residues Gly-191 and 212–213 (GH) contribute to the 3-amino-2-oxopropyl phosphate site.

It belongs to the PNP synthase family. In terms of assembly, homooctamer; tetramer of dimers.

It localises to the cytoplasm. The enzyme catalyses 3-amino-2-oxopropyl phosphate + 1-deoxy-D-xylulose 5-phosphate = pyridoxine 5'-phosphate + phosphate + 2 H2O + H(+). The protein operates within cofactor biosynthesis; pyridoxine 5'-phosphate biosynthesis; pyridoxine 5'-phosphate from D-erythrose 4-phosphate: step 5/5. In terms of biological role, catalyzes the complicated ring closure reaction between the two acyclic compounds 1-deoxy-D-xylulose-5-phosphate (DXP) and 3-amino-2-oxopropyl phosphate (1-amino-acetone-3-phosphate or AAP) to form pyridoxine 5'-phosphate (PNP) and inorganic phosphate. This is Pyridoxine 5'-phosphate synthase from Prochlorococcus marinus subsp. pastoris (strain CCMP1986 / NIES-2087 / MED4).